The chain runs to 122 residues: Large ribosomal subunit protein uL14 (122 aa).

The protein belongs to the universal ribosomal protein uL14 family. As to quaternary structure, part of the 50S ribosomal subunit. Forms a cluster with proteins L3 and L19. In the 70S ribosome, L14 and L19 interact and together make contacts with the 16S rRNA in bridges B5 and B8.

Functionally, binds to 23S rRNA. Forms part of two intersubunit bridges in the 70S ribosome. This Vesicomyosocius okutanii subsp. Calyptogena okutanii (strain HA) protein is Large ribosomal subunit protein uL14.